Reading from the N-terminus, the 201-residue chain is Glutathione peroxidase 1 (201 aa).

At Ser32 the chain carries Phosphoserine. The active site involves Sec47. A non-standard amino acid (selenocysteine) is located at residue Sec47. 3 positions are modified to N6-acetyllysine; alternate: Lys86, Lys112, and Lys146. 3 positions are modified to N6-succinyllysine; alternate: Lys86, Lys112, and Lys146. 2 positions are modified to phosphoserine: Ser195 and Ser199.

The protein belongs to the glutathione peroxidase family. As to quaternary structure, homotetramer. Interacts with MIEN1. In terms of processing, during periods of oxidative stress, Sec-47 may react with a superoxide radical, irreversibly lose hydroselenide and be converted to dehydroalanine.

It localises to the cytoplasm. It catalyses the reaction 2 glutathione + H2O2 = glutathione disulfide + 2 H2O. The catalysed reaction is (12S)-hydroperoxy-(5Z,8Z,10E,14Z)-eicosatetraenoate + 2 glutathione = (12S)-hydroxy-(5Z,8Z,10E,14Z)-eicosatetraenoate + glutathione disulfide + H2O. In terms of biological role, protects the hemoglobin in erythrocytes from oxidative breakdown. In platelets, plays a crucial role of glutathione peroxidase in the arachidonic acid metabolism. This Hylobates lar (Lar gibbon) protein is Glutathione peroxidase 1 (GPX1).